A 126-amino-acid polypeptide reads, in one-letter code: Glycine cleavage system H protein (126 aa).

Positions 23 to 104 (TLTVGITDHA…PYDNWLFKIK (82 aa)) constitute a Lipoyl-binding domain. An N6-lipoyllysine modification is found at Lys64.

The protein belongs to the GcvH family. In terms of assembly, the glycine cleavage system is composed of four proteins: P, T, L and H. The cofactor is (R)-lipoate.

In terms of biological role, the glycine cleavage system catalyzes the degradation of glycine. The H protein shuttles the methylamine group of glycine from the P protein to the T protein. The sequence is that of Glycine cleavage system H protein from Paraburkholderia phymatum (strain DSM 17167 / CIP 108236 / LMG 21445 / STM815) (Burkholderia phymatum).